The primary structure comprises 451 residues: Phosphoglucosamine mutase (451 aa).

Ser-102 serves as the catalytic Phosphoserine intermediate. Ser-102, Asp-243, Asp-245, and Asp-247 together coordinate Mg(2+). Ser-102 is modified (phosphoserine).

The protein belongs to the phosphohexose mutase family. Mg(2+) is required as a cofactor. In terms of processing, activated by phosphorylation.

The catalysed reaction is alpha-D-glucosamine 1-phosphate = D-glucosamine 6-phosphate. In terms of biological role, catalyzes the conversion of glucosamine-6-phosphate to glucosamine-1-phosphate. In Brucella anthropi (strain ATCC 49188 / DSM 6882 / CCUG 24695 / JCM 21032 / LMG 3331 / NBRC 15819 / NCTC 12168 / Alc 37) (Ochrobactrum anthropi), this protein is Phosphoglucosamine mutase.